Here is a 387-residue protein sequence, read N- to C-terminus: LL-diaminopimelate aminotransferase (387 aa).

Substrate is bound by residues Tyr-14 and Gly-39. Pyridoxal 5'-phosphate is bound by residues Tyr-68, 102-103 (SK), Tyr-127, Asn-177, Tyr-208, and 236-238 (SLS). Substrate contacts are provided by Lys-103, Tyr-127, and Asn-177. The residue at position 239 (Lys-239) is an N6-(pyridoxal phosphate)lysine. Arg-247 provides a ligand contact to pyridoxal 5'-phosphate. Residue Arg-365 participates in substrate binding.

It belongs to the class-I pyridoxal-phosphate-dependent aminotransferase family. LL-diaminopimelate aminotransferase subfamily. As to quaternary structure, homodimer. Pyridoxal 5'-phosphate is required as a cofactor.

The enzyme catalyses (2S,6S)-2,6-diaminopimelate + 2-oxoglutarate = (S)-2,3,4,5-tetrahydrodipicolinate + L-glutamate + H2O + H(+). It functions in the pathway amino-acid biosynthesis; L-lysine biosynthesis via DAP pathway; LL-2,6-diaminopimelate from (S)-tetrahydrodipicolinate (aminotransferase route): step 1/1. In terms of biological role, involved in the synthesis of meso-diaminopimelate (m-DAP or DL-DAP), required for both lysine and peptidoglycan biosynthesis. Catalyzes the direct conversion of tetrahydrodipicolinate to LL-diaminopimelate. The protein is LL-diaminopimelate aminotransferase of Aquifex aeolicus (strain VF5).